Here is a 624-residue protein sequence, read N- to C-terminus: Phosphoenolpyruvate carboxykinase (ATP) 1 (624 aa).

Residues 1–22 (MASPNGGVTTYDYDDSDSAAPV) are disordered. Position 322–329 (322–329 (GLSGTGKT)) interacts with ATP.

The protein belongs to the phosphoenolpyruvate carboxykinase (ATP) family. Homohexamer. In terms of tissue distribution, green leaves but not in roots or etiolated shoots.

The protein resides in the cytoplasm. The enzyme catalyses oxaloacetate + ATP = phosphoenolpyruvate + ADP + CO2. It participates in carbohydrate biosynthesis; gluconeogenesis. The polypeptide is Phosphoenolpyruvate carboxykinase (ATP) 1 (PCK1) (Urochloa panicoides (Panic liverseed grass)).